The primary structure comprises 388 residues: Putative C-&gt;U-editing enzyme APOBEC-4 (388 aa).

The CMP/dCMP-type deaminase domain maps to 60–176 (PQTKHLTFYE…AWNREALRGL (117 aa)). Zn(2+) is bound at residue H92. The active-site Proton donor is E94. The Zn(2+) site is built by C126 and C133. The disordered stretch occupies residues 322–356 (KVKALRKSPSGRPVKKEEARKGSTRSQEANETNKS).

Belongs to the cytidine and deoxycytidylate deaminase family. Zn(2+) is required as a cofactor.

Its function is as follows. Putative C to U editing enzyme whose physiological substrate is not yet known. This chain is Putative C-&gt;U-editing enzyme APOBEC-4 (Apobec4), found in Rattus norvegicus (Rat).